Consider the following 120-residue polypeptide: FK506-binding protein 1A (120 aa).

One can recognise a PPIase FKBP-type domain in the interval 26–114; sequence GDNVDVHYKG…IFETELVGIK (89 aa).

It belongs to the FKBP-type PPIase family. FKBP1 subfamily.

Its subcellular location is the cytoplasm. It carries out the reaction [protein]-peptidylproline (omega=180) = [protein]-peptidylproline (omega=0). Functionally, PPIases accelerate the folding of proteins. It catalyzes the cis-trans isomerization of proline imidic peptide bonds in oligopeptides. In Neurospora crassa (strain ATCC 24698 / 74-OR23-1A / CBS 708.71 / DSM 1257 / FGSC 987), this protein is FK506-binding protein 1A (fkr-2).